A 331-amino-acid chain; its full sequence is Phospholipase A2 inhibitor (331 aa).

A signal peptide spans 1–23 (MKSSVPSLLIACLVMSLNSYTQQ). Asn35 carries N-linked (GlcNAc...) asparagine glycosylation. LRR repeat units follow at residues 78-101 (LPNLQELHLSNNRLKTLPSGLFRN), 103-125 (PQLHTLDLSTNHLEDLPPEIFTN), 127-149 (SSLILLPLSENQLAELHPSWFQT), 150-173 (LGELRILGLDHNQVKEIPISCFDK), 175-197 (KKLTSLDLSFNLLRRLAPEMFSG), 199-221 (DNLEKLILESNPIQCIVGRTFHW), 223-244 (PKLTVLSLKNSSLTNIMGFFQP), and 245-268 (LEQLELLDLSDNELTTMEPPVYKT). Asn125 carries an N-linked (GlcNAc...) asparagine glycan. An N-linked (GlcNAc...) asparagine glycan is attached at Asn232. The N-linked (GlcNAc...) asparagine glycan is linked to Asn271. An LRRCT domain is found at 279 to 330 (NPWACDCRLDNLLTWVNEHNIHLYSKEEIVCASPKHFKGECATSLHKSQICP).

In terms of assembly, homotrimer.

The protein localises to the secreted. Its function is as follows. Inhibits the enzymatic activity of the basic phospholipase A2 (PLA2). The protein is Phospholipase A2 inhibitor of Gloydius brevicaudus siniticus (Chinese mamushi).